We begin with the raw amino-acid sequence, 387 residues long: Sorting nexin-7 (387 aa).

The PX domain occupies 30 to 151; sequence KDLFITVDEP…IFLTAQAWEL (122 aa). The a 1,2-diacyl-sn-glycero-3-phospho-(1D-myo-inositol-3-phosphate) site is built by Arg-73, Gln-75, Lys-103, and Arg-117. The 210-residue stretch at 178-387 folds into the BAR domain; the sequence is GVKNRPEEFM…HLEETSEDKP (210 aa).

Belongs to the sorting nexin family. As to quaternary structure, heterodimer; heterodimerizes with SNX4.

It is found in the early endosome membrane. Its function is as follows. Involved in the regulation of endocytosis and in several stages of intracellular trafficking. Together with SNX4, involved in autophagosome assembly by regulating trafficking and recycling of phospholipid scramblase ATG9A. This chain is Sorting nexin-7 (SNX7), found in Macaca fascicularis (Crab-eating macaque).